A 485-amino-acid polypeptide reads, in one-letter code: Retron Mx162 reverse transcriptase (485 aa).

Residues 1–33 (MTARLDPFVPAASPQAVPTPELTAPSSDAAAKR) form a disordered region. The 241-residue stretch at 167–407 (RWFAFHREVD…TRQRVTGLVV (241 aa)) folds into the Reverse transcriptase domain. Residues aspartate 250, aspartate 346, and aspartate 347 each coordinate Mg(2+).

It belongs to the bacterial reverse transcriptase family.

The catalysed reaction is DNA(n) + a 2'-deoxyribonucleoside 5'-triphosphate = DNA(n+1) + diphosphate. Its activity is regulated as follows. msDNA synthesis is inhibited by rifampicin and chloramphenicol. In terms of biological role, reverse transcriptase (RT) responsible for synthesis of msDNA-Mx162 (a branched molecule with RNA linked by a 2',5'-phosphodiester bond to ssDNA). The retron transcript serves as primer (from a conserved internal G residue) and template for the reaction, and codes for the RT. The retron is involved in antiviral defense. This chain is Retron Mx162 reverse transcriptase, found in Myxococcus xanthus.